The primary structure comprises 75 residues: Small ribosomal subunit protein bS18 (75 aa).

The protein belongs to the bacterial ribosomal protein bS18 family. Part of the 30S ribosomal subunit. Forms a tight heterodimer with protein bS6.

Functionally, binds as a heterodimer with protein bS6 to the central domain of the 16S rRNA, where it helps stabilize the platform of the 30S subunit. In Psychromonas ingrahamii (strain DSM 17664 / CCUG 51855 / 37), this protein is Small ribosomal subunit protein bS18.